Consider the following 425-residue polypeptide: Dihydroorotase (425 aa).

Positions 61 and 63 each coordinate Zn(2+). Residues 63-65 and asparagine 95 each bind substrate; that span reads HLR. Zn(2+) contacts are provided by aspartate 153, histidine 180, and histidine 233. Substrate is bound at residue asparagine 279. Aspartate 306 is a binding site for Zn(2+). Aspartate 306 is an active-site residue. Histidine 310 contributes to the substrate binding site.

This sequence belongs to the metallo-dependent hydrolases superfamily. DHOase family. Class I DHOase subfamily. Zn(2+) serves as cofactor.

The catalysed reaction is (S)-dihydroorotate + H2O = N-carbamoyl-L-aspartate + H(+). The protein operates within pyrimidine metabolism; UMP biosynthesis via de novo pathway; (S)-dihydroorotate from bicarbonate: step 3/3. Catalyzes the reversible cyclization of carbamoyl aspartate to dihydroorotate. The chain is Dihydroorotase from Geotalea daltonii (strain DSM 22248 / JCM 15807 / FRC-32) (Geobacter daltonii).